A 226-amino-acid polypeptide reads, in one-letter code: 7-cyano-7-deazaguanine synthase (226 aa).

8-18 (ISGGLDSTTCL) contributes to the ATP binding site. Residues cysteine 188, cysteine 198, cysteine 201, and cysteine 204 each contribute to the Zn(2+) site.

This sequence belongs to the QueC family. Zn(2+) is required as a cofactor.

It catalyses the reaction 7-carboxy-7-deazaguanine + NH4(+) + ATP = 7-cyano-7-deazaguanine + ADP + phosphate + H2O + H(+). Its pathway is purine metabolism; 7-cyano-7-deazaguanine biosynthesis. Functionally, catalyzes the ATP-dependent conversion of 7-carboxy-7-deazaguanine (CDG) to 7-cyano-7-deazaguanine (preQ(0)). The chain is 7-cyano-7-deazaguanine synthase from Coxiella burnetii (strain RSA 493 / Nine Mile phase I).